The chain runs to 204 residues: Large ribosomal subunit protein uL18 (204 aa).

It belongs to the universal ribosomal protein uL18 family. Part of the 50S ribosomal subunit. Contacts the 5S and 23S rRNAs.

Functionally, this is one of the proteins that bind and probably mediate the attachment of the 5S RNA into the large ribosomal subunit, where it forms part of the central protuberance. In Ignicoccus hospitalis (strain KIN4/I / DSM 18386 / JCM 14125), this protein is Large ribosomal subunit protein uL18.